The sequence spans 256 residues: Probable histidine-binding protein (256 aa).

The signal sequence occupies residues 1–19; it reads MKKFLTAFLVAFTGLFLVA. The N-palmitoyl cysteine moiety is linked to residue C20. A lipid anchor (S-diacylglycerol cysteine) is attached at C20.

Belongs to the bacterial solute-binding protein 3 family.

Its subcellular location is the cell membrane. Its function is as follows. Involved in histidine transport. This Campylobacter jejuni subsp. jejuni serotype O:2 (strain ATCC 700819 / NCTC 11168) protein is Probable histidine-binding protein (hisJ).